The chain runs to 435 residues: Methylenetetrahydrofolate--tRNA-(uracil-5-)-methyltransferase TrmFO (435 aa).

9–14 lines the FAD pocket; it reads GAGLAG.

This sequence belongs to the MnmG family. TrmFO subfamily. Requires FAD as cofactor.

It localises to the cytoplasm. It catalyses the reaction uridine(54) in tRNA + (6R)-5,10-methylene-5,6,7,8-tetrahydrofolate + NADH + H(+) = 5-methyluridine(54) in tRNA + (6S)-5,6,7,8-tetrahydrofolate + NAD(+). The catalysed reaction is uridine(54) in tRNA + (6R)-5,10-methylene-5,6,7,8-tetrahydrofolate + NADPH + H(+) = 5-methyluridine(54) in tRNA + (6S)-5,6,7,8-tetrahydrofolate + NADP(+). Functionally, catalyzes the folate-dependent formation of 5-methyl-uridine at position 54 (M-5-U54) in all tRNAs. This chain is Methylenetetrahydrofolate--tRNA-(uracil-5-)-methyltransferase TrmFO, found in Staphylococcus epidermidis (strain ATCC 35984 / DSM 28319 / BCRC 17069 / CCUG 31568 / BM 3577 / RP62A).